Consider the following 477-residue polypeptide: Ribulose bisphosphate carboxylase large chain (477 aa).

The propeptide occupies methionine 1 to serine 2. Position 3 is an N-acetylproline (proline 3). Lysine 14 bears the N6,N6,N6-trimethyllysine mark. Residues asparagine 123 and threonine 173 each coordinate substrate. Lysine 175 (proton acceptor) is an active-site residue. Substrate is bound at residue lysine 177. The Mg(2+) site is built by lysine 201, aspartate 203, and glutamate 204. The residue at position 201 (lysine 201) is an N6-carboxylysine. The active-site Proton acceptor is histidine 294. 3 residues coordinate substrate: arginine 295, histidine 327, and serine 379.

This sequence belongs to the RuBisCO large chain family. Type I subfamily. As to quaternary structure, heterohexadecamer of 8 large chains and 8 small chains; disulfide-linked. The disulfide link is formed within the large subunit homodimers. The cofactor is Mg(2+). In terms of processing, the disulfide bond which can form in the large chain dimeric partners within the hexadecamer appears to be associated with oxidative stress and protein turnover.

Its subcellular location is the plastid. It localises to the chloroplast. The catalysed reaction is 2 (2R)-3-phosphoglycerate + 2 H(+) = D-ribulose 1,5-bisphosphate + CO2 + H2O. It catalyses the reaction D-ribulose 1,5-bisphosphate + O2 = 2-phosphoglycolate + (2R)-3-phosphoglycerate + 2 H(+). In terms of biological role, ruBisCO catalyzes two reactions: the carboxylation of D-ribulose 1,5-bisphosphate, the primary event in carbon dioxide fixation, as well as the oxidative fragmentation of the pentose substrate in the photorespiration process. Both reactions occur simultaneously and in competition at the same active site. The chain is Ribulose bisphosphate carboxylase large chain from Nicotiana acuminata (Acuminate tobacco).